The following is a 143-amino-acid chain: Transcriptional regulator SlyA (143 aa).

In terms of domain architecture, HTH marR-type spans 2–135; the sequence is ESTLGSDLSR…LTNLVERLEQ (134 aa). The segment at residues 49 to 72 is a DNA-binding region (H-T-H motif); the sequence is QIQLAKAIGIEQPSLVRTLDQLED.

It belongs to the SlyA family. Homodimer.

Functionally, transcription regulator that can specifically activate or repress expression of target genes. The chain is Transcriptional regulator SlyA from Edwardsiella tarda.